The primary structure comprises 106 residues: MVNVPKTRRTYCKGKECRKHTQHKVTQYKAGKASLFAQGKRRYDRKQSGYGGQTKPVFHKKAKTTKKVVLRLECVVCKTKAQLALKRCKHFELGGDKKQKGQALQF.

This sequence belongs to the eukaryotic ribosomal protein eL42 family.

This Cyberlindnera jadinii (Torula yeast) protein is Large ribosomal subunit protein eL42 (RPL44).